Consider the following 232-residue polypeptide: Putative homeobox protein NANOG2 (232 aa).

The interval 1-39 is disordered; sequence MDLPIQDSHDSSTSPKGKQPTTAEKSATKKEDKVPVKKQ. The segment covering 11–25 has biased composition (polar residues); the sequence is SSTSPKGKQPTTAEK. Over residues 26–35 the composition is skewed to basic and acidic residues; sequence SATKKEDKVP. Repeat copies occupy residues 123–127, 128–132, 133–137, 143–147, 148–152, 153–157, 158–162, and 163–167. Residues 123–167 are 8 X repeats starting with a Trp in each unit; the sequence is WSNQTWNNSTWSNQTQNIQSWSNHSWNTQTWCTQSWNNQAWNSPF. Residues 123–167 are sufficient for transactivation activity; the sequence is WSNQTWNNSTWSNQTQNIQSWSNHSWNTQTWCTQSWNNQAWNSPF. A sufficient for strong transactivation activity region spans residues 168–232; the sequence is YNCGEESLQS…YSMNMQPEDV (65 aa).

This sequence belongs to the Nanog homeobox family.

The protein localises to the nucleus. Functionally, probable transcriptional regulator. The polypeptide is Putative homeobox protein NANOG2 (NANOGP1) (Homo sapiens (Human)).